We begin with the raw amino-acid sequence, 763 residues long: 5-methyltetrahydropteroyltriglutamate--homocysteine methyltransferase (763 aa).

Residues 16–19 (RELK) and Lys114 contribute to the 5-methyltetrahydropteroyltri-L-glutamate site. L-homocysteine-binding positions include 438–440 (IGS) and Glu491. L-methionine-binding positions include 438-440 (IGS) and Glu491. 5-methyltetrahydropteroyltri-L-glutamate-binding positions include 522–523 (RC) and Trp568. Asp606 is a binding site for L-homocysteine. Residue Asp606 coordinates L-methionine. Glu612 contacts 5-methyltetrahydropteroyltri-L-glutamate. Zn(2+) contacts are provided by His648, Cys650, and Glu672. The active-site Proton donor is His701. Residue Cys733 coordinates Zn(2+).

It belongs to the vitamin-B12 independent methionine synthase family. Zn(2+) is required as a cofactor.

The catalysed reaction is 5-methyltetrahydropteroyltri-L-glutamate + L-homocysteine = tetrahydropteroyltri-L-glutamate + L-methionine. It participates in amino-acid biosynthesis; L-methionine biosynthesis via de novo pathway; L-methionine from L-homocysteine (MetE route): step 1/1. Functionally, catalyzes the transfer of a methyl group from 5-methyltetrahydrofolate to homocysteine resulting in methionine formation. The protein is 5-methyltetrahydropteroyltriglutamate--homocysteine methyltransferase of Parvibaculum lavamentivorans (strain DS-1 / DSM 13023 / NCIMB 13966).